Here is an 816-residue protein sequence, read N- to C-terminus: Glycerol-3-phosphate acyltransferase (816 aa).

An HXXXXD motif motif is present at residues cysteine 298–methionine 303.

This sequence belongs to the GPAT/DAPAT family.

The protein localises to the cell membrane. It catalyses the reaction sn-glycerol 3-phosphate + an acyl-CoA = a 1-acyl-sn-glycero-3-phosphate + CoA. Its pathway is phospholipid metabolism; CDP-diacylglycerol biosynthesis; CDP-diacylglycerol from sn-glycerol 3-phosphate: step 1/3. The chain is Glycerol-3-phosphate acyltransferase from Hamiltonella defensa subsp. Acyrthosiphon pisum (strain 5AT).